Consider the following 485-residue polypeptide: Hemolysin (485 aa).

An N-terminal signal peptide occupies residues methionine 1–alanine 28. 4 beta stranded membrane-spanning segments follow: residues lysine 196–tyrosine 209, isoleucine 216–glutamate 225, serine 294–alanine 303, and glutamate 311–serine 323. The Conserved undecapeptide motif lies at glutamate 465–arginine 475.

It belongs to the cholesterol-dependent cytolysin family. As to quaternary structure, homooligomeric pore complex of 35 to 50 subunits; when inserted in the host membrane.

It localises to the secreted. Its subcellular location is the host cell membrane. A cholesterol-dependent toxin with hemolytic activity against host red blood cells. Causes cytolysis by forming pores in cholesterol containing host membranes. binding to target membranes, the protein undergoes a major conformation change, leading to its insertion in the host membrane and formation of an oligomeric pore complex. Cholesterol is required for binding to host membranes, membrane insertion and pore formation; cholesterol binding is mediated by a Thr-Leu pair in the C-terminus. Can be reversibly inactivated by oxidation. The chain is Hemolysin from Bacillus cereus.